The primary structure comprises 266 residues: MFLVNSFLKGGGGGGGGGGGLGGGLGNVLGGLISGAGGGGGGGGGGGGGGGGGGTAMRILGGVISAISEAAAQYNPEPPPPRTHYSNIEANESEEVRQFRRLFAQLAGDDMEVSATELMNILNKVVTRHPDLKTDGFGIDTCRSMVAVMDSDTTGKLGFEEFKYLWNNIKKWQAIYKQFDVDRSGTIGSSELPGAFEAAGFHLNEHLYSMIIRRYSDEGGNMDFDNFISCLVRLDAMFRAFKSLDKDGTGQIQVNIQEWLQLTMYS.

Met-1 is subject to N-acetylmethionine. Ser-6 carries the post-translational modification Phosphoserine. The EF-hand 1; atypical domain maps to 94-128 (EEVRQFRRLFAQLAGDDMEVSATELMNILNKVVTR). Ca(2+) contacts are provided by Ala-107, Asp-110, Glu-112, Glu-117, Asp-135, Asp-150, Asp-152, Thr-154, Lys-156, and Glu-161. 4 consecutive EF-hand domains span residues 137-170 (FGID…NNIK), 167-202 (NNIK…AGFH), 203-231 (LNEH…ISCL), and 232-266 (VRLD…TMYS). Lys-177 is modified (N6-acetyllysine). The Ca(2+) site is built by Asp-180, Asp-182, Ser-184, Thr-186, Glu-191, and Asp-223.

In terms of assembly, homodimer or heterodimer of a large (catalytic) and a small (regulatory) subunit. In presence of calcium, the heterodimer dissociates.

The protein localises to the cytoplasm. It localises to the cell membrane. Functionally, regulatory subunit of the calcium-regulated non-lysosomal thiol-protease which catalyzes limited proteolysis of substrates involved in cytoskeletal remodeling and signal transduction. Essential for embryonic development. This is Calpain small subunit 1 (CAPNS1) from Sus scrofa (Pig).